A 241-amino-acid polypeptide reads, in one-letter code: uncharacterized protein (241 aa).

5 consecutive transmembrane segments (helical) span residues 7–27 (LIFL…WSVF), 37–57 (LFLL…LLLI), 72–92 (IIAL…SGFG), 110–130 (INLV…YVAF), and 138–158 (FGTL…IKII).

It is found in the cell membrane. This is an uncharacterized protein from Methanocaldococcus jannaschii (strain ATCC 43067 / DSM 2661 / JAL-1 / JCM 10045 / NBRC 100440) (Methanococcus jannaschii).